Consider the following 276-residue polypeptide: Protease HtpX homolog (276 aa).

Residues I14–F34 form a helical membrane-spanning segment. A Zn(2+)-binding site is contributed by H130. E131 is a catalytic residue. H134 provides a ligand contact to Zn(2+). A run of 2 helical transmembrane segments spans residues V145–G165 and L171–I191. E196 serves as a coordination point for Zn(2+).

The protein belongs to the peptidase M48B family. Zn(2+) serves as cofactor.

The protein resides in the cell inner membrane. This chain is Protease HtpX homolog, found in Salinibacter ruber (strain DSM 13855 / M31).